Consider the following 459-residue polypeptide: Asperlicin C monooxygenase (459 aa).

Residues aspartate 49, alanine 62, and arginine 121 each coordinate FAD. Arginine 199 is a catalytic residue. Positions 323 and 336 each coordinate FAD.

Belongs to the paxM FAD-dependent monooxygenase family. The cofactor is FAD.

The enzyme catalyses asperlicin C + NADPH + O2 + H(+) = asperlicin E + NADP(+) + H2O. It carries out the reaction asperlicin C + NADH + O2 + H(+) = asperlicin E + NAD(+) + H2O. Functionally, catalyzes the conversion of asperlicin A to form asperlicin E, a potent cholecystokinin receptor CCK(A) antagonist. The chain is Asperlicin C monooxygenase from Petromyces alliaceus (Aspergillus alliaceus).